The chain runs to 300 residues: MADAWKDLASGTVGGAAQLVVGHPFDTIKVKLQSQPTPAPGQLPRYTGAIDAVKQTVASEGTKGLYKGMGAPLATVAAFNAVLFTVRGQMEGLLRSEAGVPLTISQQFVAGAGAGFAVSFLACPTELIKCRLQAQGALAGASTTSSVVAAVKYGGPMDVARHVLRSEGGARGLFKGLFPTFAREVPGNATMFAAYEAFKRFLAGGSDTSSLGQGSLIMAGGVAGASFWGIVYPTDVVKSVLQVDDYKNPRYTGSMDAFRKILKSEGVKGLYKGFGPAMARSVPANAACFLAYEMTRSSLG.

Solcar repeat units lie at residues 2–93, 102–201, and 211–298; these read ADAW…MEGL, LTIS…FKRF, and LGQG…TRSS. The next 6 helical transmembrane spans lie at 8–28, 64–84, 108–128, 176–195, 211–231, and 273–292; these read LASG…FDTI, GLYK…AVLF, FVAG…TELI, GLFP…FAAY, LGQG…WGIV, and GFGP…FLAY.

It belongs to the mitochondrial carrier (TC 2.A.29) family. In terms of tissue distribution, high expression in cotyledons, leaves, flowers and developing siliques. Lower expression in roots and maturing siliques. Not detected in meristematic tissues.

The protein resides in the mitochondrion inner membrane. In terms of biological role, involved in photorespiratory metabolism. Acts probably as a carrier for a glycine decarboxylase (GDC) cofactor or, alternatively, may act as a mitochondrial glycine shuttle. Involved in the transition from the embryonic stage to the juvenile autotrophic stage. This is Mitochondrial carnitine/acylcarnitine carrier-like protein (BOU) from Arabidopsis thaliana (Mouse-ear cress).